The primary structure comprises 318 residues: MRHLLSTRDLSRDEAVRILDVAEDMADVGTREIKKTPALRGRTVVNLFFEDSTRTRISFEAAAKRLSADVINFSAKGSSVSKGESLKDTAQTLQAMGADGVVVRHPSSGAPHTLAGSGWIDAGIVNAGDGTHEHPTQALLDAFTIRRRLHGSAARGKGLDGTRVVIVGDVLHSRVARSNAWLLTTLGAEVTLVAPPTLVPVGVGSWPVTVRYDLDAALRDGAPDAVMMLRIQAERMRAAFFPNPREYARIWGLDDARLALLGPDTIVMHPGPMNRGLEISAAAADSERSTVREQVANGVSVRMAVLYLLLSGDGKADR.

Residues R54 and T55 each coordinate carbamoyl phosphate. L-aspartate is bound at residue K82. Residues R104, H134, and Q137 each contribute to the carbamoyl phosphate site. 2 residues coordinate L-aspartate: R174 and R230. Carbamoyl phosphate-binding residues include G271 and P272.

This sequence belongs to the aspartate/ornithine carbamoyltransferase superfamily. ATCase family. As to quaternary structure, heterododecamer (2C3:3R2) of six catalytic PyrB chains organized as two trimers (C3), and six regulatory PyrI chains organized as three dimers (R2).

The enzyme catalyses carbamoyl phosphate + L-aspartate = N-carbamoyl-L-aspartate + phosphate + H(+). It functions in the pathway pyrimidine metabolism; UMP biosynthesis via de novo pathway; (S)-dihydroorotate from bicarbonate: step 2/3. In terms of biological role, catalyzes the condensation of carbamoyl phosphate and aspartate to form carbamoyl aspartate and inorganic phosphate, the committed step in the de novo pyrimidine nucleotide biosynthesis pathway. This Clavibacter sepedonicus (Clavibacter michiganensis subsp. sepedonicus) protein is Aspartate carbamoyltransferase catalytic subunit.